The following is a 114-amino-acid chain: Large ribosomal subunit protein uL22 (114 aa).

Belongs to the universal ribosomal protein uL22 family. In terms of assembly, part of the 50S ribosomal subunit.

Functionally, this protein binds specifically to 23S rRNA; its binding is stimulated by other ribosomal proteins, e.g. L4, L17, and L20. It is important during the early stages of 50S assembly. It makes multiple contacts with different domains of the 23S rRNA in the assembled 50S subunit and ribosome. The globular domain of the protein is located near the polypeptide exit tunnel on the outside of the subunit, while an extended beta-hairpin is found that lines the wall of the exit tunnel in the center of the 70S ribosome. This chain is Large ribosomal subunit protein uL22, found in Methylacidiphilum infernorum (isolate V4) (Methylokorus infernorum (strain V4)).